We begin with the raw amino-acid sequence, 413 residues long: Multifunctional CCA protein (413 aa).

2 residues coordinate ATP: Gly-8 and Arg-11. The CTP site is built by Gly-8 and Arg-11. Mg(2+) contacts are provided by Asp-21 and Asp-23. Residues Arg-91, Arg-137, and Arg-140 each coordinate ATP. Residues Arg-91, Arg-137, and Arg-140 each coordinate CTP. In terms of domain architecture, HD spans 228–329 (TGVHTLMTLS…VKLFDAIDAW (102 aa)).

Belongs to the tRNA nucleotidyltransferase/poly(A) polymerase family. Bacterial CCA-adding enzyme type 1 subfamily. As to quaternary structure, monomer. Can also form homodimers and oligomers. Mg(2+) serves as cofactor. The cofactor is Ni(2+).

It carries out the reaction a tRNA precursor + 2 CTP + ATP = a tRNA with a 3' CCA end + 3 diphosphate. The catalysed reaction is a tRNA with a 3' CCA end + 2 CTP + ATP = a tRNA with a 3' CCACCA end + 3 diphosphate. Its function is as follows. Catalyzes the addition and repair of the essential 3'-terminal CCA sequence in tRNAs without using a nucleic acid template. Adds these three nucleotides in the order of C, C, and A to the tRNA nucleotide-73, using CTP and ATP as substrates and producing inorganic pyrophosphate. tRNA 3'-terminal CCA addition is required both for tRNA processing and repair. Also involved in tRNA surveillance by mediating tandem CCA addition to generate a CCACCA at the 3' terminus of unstable tRNAs. While stable tRNAs receive only 3'-terminal CCA, unstable tRNAs are marked with CCACCA and rapidly degraded. This Salmonella paratyphi A (strain ATCC 9150 / SARB42) protein is Multifunctional CCA protein.